Reading from the N-terminus, the 109-residue chain is Arminin 6560 (109 aa).

An N-terminal signal peptide occupies residues 1-21; it reads MKCLFGFLFIMLVAFLQDVHG. A propeptide spanning residues 22 to 77 is cleaved from the precursor; that stretch reads VDSCIGKPCKVKGEDMKDIKEKKIEDIKEEIKNVKKEIFEDVDDELLDDNIRDDKI. At Ile106 the chain carries Isoleucine amide.

This sequence belongs to the arminin family. Expressed in the ectodermal epithelium.

Its subcellular location is the secreted. The protein resides in the target cell membrane. Its function is as follows. Antimicrobial peptide with a broad-spectrum antimicrobial activity. Keeps its antibacterial activity under a wide range of salt concentrations that mimic physiological conditions of human blood, which is surprising, since Hydra is an obligate freshwater animal with nearly no salt tolerance. Does not affect red blood cells. The polypeptide is Arminin 6560 (Hydra vulgaris (Hydra)).